A 209-amino-acid chain; its full sequence is Small ribosomal subunit protein uS4 (209 aa).

The segment at Ser23–Asp46 is disordered. One can recognise an S4 RNA-binding domain in the interval Cys93–Lys153.

It belongs to the universal ribosomal protein uS4 family. Part of the 30S ribosomal subunit. Contacts protein S5. The interaction surface between S4 and S5 is involved in control of translational fidelity.

Functionally, one of the primary rRNA binding proteins, it binds directly to 16S rRNA where it nucleates assembly of the body of the 30S subunit. With S5 and S12 plays an important role in translational accuracy. The protein is Small ribosomal subunit protein uS4 of Chlamydia pneumoniae (Chlamydophila pneumoniae).